The sequence spans 179 residues: Large ribosomal subunit protein uL5 (179 aa).

The protein belongs to the universal ribosomal protein uL5 family. In terms of assembly, part of the 50S ribosomal subunit; part of the 5S rRNA/L5/L18/L25 subcomplex. Contacts the 5S rRNA and the P site tRNA. Forms a bridge to the 30S subunit in the 70S ribosome.

This is one of the proteins that bind and probably mediate the attachment of the 5S RNA into the large ribosomal subunit, where it forms part of the central protuberance. In the 70S ribosome it contacts protein S13 of the 30S subunit (bridge B1b), connecting the 2 subunits; this bridge is implicated in subunit movement. Contacts the P site tRNA; the 5S rRNA and some of its associated proteins might help stabilize positioning of ribosome-bound tRNAs. The chain is Large ribosomal subunit protein uL5 from Tolumonas auensis (strain DSM 9187 / NBRC 110442 / TA 4).